A 344-amino-acid chain; its full sequence is Holliday junction branch migration complex subunit RuvB (344 aa).

Residues 1–180 (MSRIVSGEAQ…FGIPVRLEFY (180 aa)) are large ATPase domain (RuvB-L). Leucine 19, arginine 20, glycine 61, lysine 64, threonine 65, threonine 66, arginine 170, tyrosine 180, and arginine 217 together coordinate ATP. Position 65 (threonine 65) interacts with Mg(2+). The small ATPAse domain (RuvB-S) stretch occupies residues 181-251 (THDELARVLL…AAAAALARLD (71 aa)). The segment at 254-344 (EVGLDALDRR…AAPPADLFDK (91 aa)) is head domain (RuvB-H). DNA contacts are provided by arginine 290, arginine 309, and arginine 314.

Belongs to the RuvB family. As to quaternary structure, homohexamer. Forms an RuvA(8)-RuvB(12)-Holliday junction (HJ) complex. HJ DNA is sandwiched between 2 RuvA tetramers; dsDNA enters through RuvA and exits via RuvB. An RuvB hexamer assembles on each DNA strand where it exits the tetramer. Each RuvB hexamer is contacted by two RuvA subunits (via domain III) on 2 adjacent RuvB subunits; this complex drives branch migration. In the full resolvosome a probable DNA-RuvA(4)-RuvB(12)-RuvC(2) complex forms which resolves the HJ.

The protein resides in the cytoplasm. It carries out the reaction ATP + H2O = ADP + phosphate + H(+). Functionally, the RuvA-RuvB-RuvC complex processes Holliday junction (HJ) DNA during genetic recombination and DNA repair, while the RuvA-RuvB complex plays an important role in the rescue of blocked DNA replication forks via replication fork reversal (RFR). RuvA specifically binds to HJ cruciform DNA, conferring on it an open structure. The RuvB hexamer acts as an ATP-dependent pump, pulling dsDNA into and through the RuvAB complex. RuvB forms 2 homohexamers on either side of HJ DNA bound by 1 or 2 RuvA tetramers; 4 subunits per hexamer contact DNA at a time. Coordinated motions by a converter formed by DNA-disengaged RuvB subunits stimulates ATP hydrolysis and nucleotide exchange. Immobilization of the converter enables RuvB to convert the ATP-contained energy into a lever motion, pulling 2 nucleotides of DNA out of the RuvA tetramer per ATP hydrolyzed, thus driving DNA branch migration. The RuvB motors rotate together with the DNA substrate, which together with the progressing nucleotide cycle form the mechanistic basis for DNA recombination by continuous HJ branch migration. Branch migration allows RuvC to scan DNA until it finds its consensus sequence, where it cleaves and resolves cruciform DNA. This chain is Holliday junction branch migration complex subunit RuvB, found in Phenylobacterium zucineum (strain HLK1).